Here is a 599-residue protein sequence, read N- to C-terminus: E3 ubiquitin-protein ligase Kcmf1 (599 aa).

The ZZ-type zinc finger occupies 4–60; it reads HEGVSCDSCLKSNFNGRRYKCLICYDYDLCADCYEDGVTSTRHLVEHPMQCILTRSD. Residues cysteine 9, cysteine 12, cysteine 24, cysteine 27, cysteine 33, cysteine 36, histidine 46, and histidine 50 each coordinate Zn(2+). A C2H2-type zinc finger spans residues 78–101; the sequence is FTCPYCKKMGFSDATLLEHVSAEH. Disordered stretches follow at residues 155–193, 229–253, 269–294, 466–486, and 507–599; these read HGGGVRRIPGRTLGGPRTRRSNMHFSSSSGLSALSPSGR, DRQQVTASRQIDRLPRRAHPIVSTS, GSGGSGAVGSGSGGGSGATAPPNLRT, VEQQQQQQQLQPAMVRQVNQM, and NTTQ…PDTR. Composition is skewed to low complexity over residues 160-170 and 180-192; these read RRIPGRTLGGP and SSSSGLSALSPSG. A compositionally biased stretch (gly residues) spans 269-285; sequence GSGGSGAVGSGSGGGSG. Residues 513 to 532 show a composition bias toward gly residues; the sequence is GTGGLGGAGATAAPGGGASG. Residues 538 to 547 are compositionally biased toward basic and acidic residues; it reads TADRGIERRS. Low complexity predominate over residues 559 to 593; that stretch reads SQQPQQQQQSTANPAASQQKYKQNASAATAAGNTN.

This sequence belongs to the KCMF1 family. As to quaternary structure, interacts with poe.

The catalysed reaction is S-ubiquitinyl-[E2 ubiquitin-conjugating enzyme]-L-cysteine + [acceptor protein]-L-lysine = [E2 ubiquitin-conjugating enzyme]-L-cysteine + N(6)-ubiquitinyl-[acceptor protein]-L-lysine.. Its function is as follows. Has intrinsic E3 ubiquitin ligase activity and promotes ubiquitination. Involved in the negative regulation of the Ras/MAPK signaling pathway in the wing by acting with the E2 enzyme Unc6 and the putative E3 ligases poe and Ufd4 to mediate the ubiquitination and proteasomal degradation of rl/MAPK. This Drosophila melanogaster (Fruit fly) protein is E3 ubiquitin-protein ligase Kcmf1.